Here is a 140-residue protein sequence, read N- to C-terminus: uncharacterized protein (140 aa).

A run of 3 helical transmembrane segments spans residues 42–62, 65–85, and 96–116; these read AFLF…IFAS, ASFL…SALG, and RASD…MLCF.

It localises to the membrane. This is an uncharacterized protein from Saccharomyces cerevisiae (strain ATCC 204508 / S288c) (Baker's yeast).